The following is a 123-amino-acid chain: MQWLAIGLGAAFGACLRGWLARFNPLHHWIPLGTLGANVLGGLLIGLALVWFERMGSGLSPNIRLFVITGFLGGLTTFSTFSAEVFTFIHHGRLLAALGLVGLHVGMTLLATALGFYCFKLVL.

The next 4 helical transmembrane spans lie at Met-1–Ala-21, Leu-32–Phe-52, Phe-66–Phe-86, and Leu-94–Leu-114. Positions 73 and 76 each coordinate Na(+).

The protein belongs to the fluoride channel Fluc/FEX (TC 1.A.43) family.

It localises to the cell inner membrane. The enzyme catalyses fluoride(in) = fluoride(out). With respect to regulation, na(+) is not transported, but it plays an essential structural role and its presence is essential for fluoride channel function. Functionally, fluoride-specific ion channel. Important for reducing fluoride concentration in the cell, thus reducing its toxicity. This chain is Fluoride-specific ion channel FluC, found in Psychrobacter arcticus (strain DSM 17307 / VKM B-2377 / 273-4).